The primary structure comprises 133 residues: Small ribosomal subunit protein uS8 (133 aa).

It belongs to the universal ribosomal protein uS8 family. As to quaternary structure, part of the 30S ribosomal subunit. Contacts proteins S5 and S12.

Its function is as follows. One of the primary rRNA binding proteins, it binds directly to 16S rRNA central domain where it helps coordinate assembly of the platform of the 30S subunit. The polypeptide is Small ribosomal subunit protein uS8 (Synechococcus sp. (strain RCC307)).